We begin with the raw amino-acid sequence, 1387 residues long: Kinesin-like protein KIF15-B (1387 aa).

Positions 26 to 364 (AIKVFVRIRP…LQFAQRAKLI (339 aa)) constitute a Kinesin motor domain. 110-117 (GQTGSGKT) is a binding site for ATP. The stretch at 369 to 1383 (VVNEDTQGNV…NLFLKETKKC (1015 aa)) forms a coiled coil. The tract at residues 1138–1387 (NSPVVLAQTP…KETKKCEHCD (250 aa)) is necessary for its targeting to microtubule minus ends.

It belongs to the TRAFAC class myosin-kinesin ATPase superfamily. Kinesin family. KLP2 subfamily. In terms of assembly, homodimer. Dimerization is required for targeting to microtubule minus ends. Found in a complex with tpx2 and microtubules. Its association with microtubules and targeting to microtubule minus ends requires tpx2. In terms of tissue distribution, strongly expressed in testis and weakly in lung (at protein level).

The protein resides in the cytoplasm. It localises to the cytoskeleton. The protein localises to the microtubule organizing center. Its subcellular location is the centrosome. It is found in the spindle. The protein resides in the spindle pole. Its function is as follows. Plus-end directed kinesin-like motor enzyme involved in mitotic spindle assembly. Required for centrosome separation and maintenance of spindle bipolarity during mitosis. The protein is Kinesin-like protein KIF15-B (kif15-b) of Xenopus laevis (African clawed frog).